The primary structure comprises 379 residues: Very late expression factor 1 (379 aa).

Residues 169-348 (VIDTILNFIN…YNIGLDETSS (180 aa)) enclose the Tyr recombinase domain. Catalysis depends on residues Arg-210, Lys-239, Arg-303, and His-326. Tyr-335 acts as the O-(3'-phospho-DNA)-tyrosine intermediate in catalysis. Residues 346–358 (TSSEEENNNDDDD) are compositionally biased toward acidic residues. Residues 346–379 (TSSEEENNNDDDDAQHNRNSSGSSGESLLYYRNE) are disordered. The span at 362–379 (NRNSSGSSGESLLYYRNE) shows a compositional bias: low complexity.

Belongs to the 'phage' integrase family.

Plays a role in nucleocapsid assembly and serves an essential function during the final stages of the DNA packaging process. Participates in the processing of branched DNA molecules at the late stages of viral genome replication. The chain is Very late expression factor 1 (VLF-1) from Lepidoptera (butterflies and moths).